A 609-amino-acid polypeptide reads, in one-letter code: UvrABC system protein C (609 aa).

Residues 15 to 92 (TGSGVYQMQD…IKQFRPRYNV (78 aa)) enclose the GIY-YIG domain. Residues 202 to 237 (DQVIIKLTERMEVASENLVFEEAAHYRDQIRQLRRL) enclose the UVR domain.

The protein belongs to the UvrC family. In terms of assembly, interacts with UvrB in an incision complex.

Its subcellular location is the cytoplasm. The UvrABC repair system catalyzes the recognition and processing of DNA lesions. UvrC both incises the 5' and 3' sides of the lesion. The N-terminal half is responsible for the 3' incision and the C-terminal half is responsible for the 5' incision. The chain is UvrABC system protein C from Coxiella burnetii (strain CbuK_Q154) (Coxiella burnetii (strain Q154)).